A 278-amino-acid chain; its full sequence is Dermonecrotic toxin LspiSicTox-betaIE2iii (278 aa).

Residue histidine 5 is part of the active site. Glutamate 25 and aspartate 27 together coordinate Mg(2+). The active-site Nucleophile is histidine 41. 2 disulfides stabilise this stretch: cysteine 45–cysteine 51 and cysteine 47–cysteine 190. Aspartate 85 is a Mg(2+) binding site.

The protein belongs to the arthropod phospholipase D family. Class II subfamily. Requires Mg(2+) as cofactor. In terms of tissue distribution, expressed by the venom gland.

The protein localises to the secreted. It catalyses the reaction an N-(acyl)-sphingosylphosphocholine = an N-(acyl)-sphingosyl-1,3-cyclic phosphate + choline. It carries out the reaction an N-(acyl)-sphingosylphosphoethanolamine = an N-(acyl)-sphingosyl-1,3-cyclic phosphate + ethanolamine. The enzyme catalyses a 1-acyl-sn-glycero-3-phosphocholine = a 1-acyl-sn-glycero-2,3-cyclic phosphate + choline. The catalysed reaction is a 1-acyl-sn-glycero-3-phosphoethanolamine = a 1-acyl-sn-glycero-2,3-cyclic phosphate + ethanolamine. In terms of biological role, dermonecrotic toxins cleave the phosphodiester linkage between the phosphate and headgroup of certain phospholipids (sphingolipid and lysolipid substrates), forming an alcohol (often choline) and a cyclic phosphate. This toxin acts on sphingomyelin (SM). It may also act on ceramide phosphoethanolamine (CPE), lysophosphatidylcholine (LPC) and lysophosphatidylethanolamine (LPE), but not on lysophosphatidylserine (LPS), and lysophosphatidylglycerol (LPG). It acts by transphosphatidylation, releasing exclusively cyclic phosphate products as second products. Induces dermonecrosis, hemolysis, increased vascular permeability, edema, inflammatory response, and platelet aggregation. The protein is Dermonecrotic toxin LspiSicTox-betaIE2iii of Loxosceles spinulosa (Recluse spider).